The sequence spans 132 residues: Dormancy-associated protein 1 (132 aa).

A disordered region spans residues 53–76 (MPAAVSPGTPTTPTTPTTPRKDNV). Over residues 61-70 (TPTTPTTPTT) the composition is skewed to low complexity. Thr-64 bears the Phosphothreonine mark.

This sequence belongs to the DRM1/ARP family. Isoform 1: Expressed mainly in the low bolt. Isoform 2: Expressed mainly in the low bolt. Detected in flowers. Isoform 4: Expressed mainly in the low bolt. Isoform 5: Expressed mainly in the 6 days old seedlings. Detected in 16 days old seedlings, axil, low bolt and floral samples, but only barely in leaves and top bolt.

The sequence is that of Dormancy-associated protein 1 from Arabidopsis thaliana (Mouse-ear cress).